Reading from the N-terminus, the 319-residue chain is MESSASCLPGFFMSFLLLQNTVLTQAMRSDIKINIQVPDTEGLLLECTSGSLIPPAEMTWRDSNGNIIPHSTAFNSQDRDGLLYLKSSILLKNRAKGPITCSIYNVTTNQEKKRSIVLPDALFKSENMSLMSNKFSCPSIYLITIIFLNFLRGILVFCCLRRKPVCFRNLMSTVMEALYSKMGVCCLLIWECLLLVLYIAFLPIYVSFRSRAFLLDDTYPLYTNWLWNICIILTVIMVLFPGLILCLLWTLNCYGQVSSLPPTSMELSTKDSEQNSSKSDDSQENYDVNCKILETCESKIFSQHQESCEDDTASTLFIS.

A signal peptide spans 1–26 (MESSASCLPGFFMSFLLLQNTVLTQA). In terms of domain architecture, Ig-like V-type spans 27–117 (MRSDIKINIQ…TNQEKKRSIV (91 aa)). Topologically, residues 27-139 (MRSDIKINIQ…LMSNKFSCPS (113 aa)) are extracellular. Residues cysteine 47 and cysteine 101 are joined by a disulfide bond. Asparagine 105 is a glycosylation site (N-linked (GlcNAc...) asparagine). Residues 140 to 160 (IYLITIIFLNFLRGILVFCCL) form a helical membrane-spanning segment. At 161-183 (RRKPVCFRNLMSTVMEALYSKMG) the chain is on the cytoplasmic side. A helical membrane pass occupies residues 184 to 204 (VCCLLIWECLLLVLYIAFLPI). Topologically, residues 205-228 (YVSFRSRAFLLDDTYPLYTNWLWN) are extracellular. A helical transmembrane segment spans residues 229–249 (ICIILTVIMVLFPGLILCLLW). Residues 250–319 (TLNCYGQVSS…DDTASTLFIS (70 aa)) lie on the Cytoplasmic side of the membrane.

It belongs to the SKINT family. As to expression, expressed in skin, thymus and testis.

It is found in the membrane. In terms of biological role, may act by engaging a cell surface molecule on immature T-cells in the embryonic thymus. The sequence is that of Selection and upkeep of intraepithelial T-cells protein 9 (Skint9) from Mus musculus (Mouse).